Here is a 373-residue protein sequence, read N- to C-terminus: Spermidine/putrescine import ATP-binding protein PotA (373 aa).

Residues 11 to 241 (IELRSLKKSY…PSNLFVAKFI (231 aa)) enclose the ABC transporter domain. Residue 43–50 (GPSGCGKT) coordinates ATP.

This sequence belongs to the ABC transporter superfamily. Spermidine/putrescine importer (TC 3.A.1.11.1) family. As to quaternary structure, the complex is composed of two ATP-binding proteins (PotA), two transmembrane proteins (PotB and PotC) and a solute-binding protein (PotD).

The protein localises to the cell inner membrane. The catalysed reaction is ATP + H2O + polyamine-[polyamine-binding protein]Side 1 = ADP + phosphate + polyamineSide 2 + [polyamine-binding protein]Side 1.. Its function is as follows. Part of the ABC transporter complex PotABCD involved in spermidine/putrescine import. Responsible for energy coupling to the transport system. This chain is Spermidine/putrescine import ATP-binding protein PotA, found in Mannheimia succiniciproducens (strain KCTC 0769BP / MBEL55E).